A 280-amino-acid chain; its full sequence is Shikimate kinase (280 aa).

ATP is bound at residue 86-96 (PPGVGLKGSAA).

It belongs to the GHMP kinase family. Archaeal shikimate kinase subfamily.

Its subcellular location is the cytoplasm. It carries out the reaction shikimate + ATP = 3-phosphoshikimate + ADP + H(+). It functions in the pathway metabolic intermediate biosynthesis; chorismate biosynthesis; chorismate from D-erythrose 4-phosphate and phosphoenolpyruvate: step 5/7. The polypeptide is Shikimate kinase (aroK) (Aeropyrum pernix (strain ATCC 700893 / DSM 11879 / JCM 9820 / NBRC 100138 / K1)).